The primary structure comprises 170 residues: 4-hydroxyphenylacetate 3-monooxygenase reductase component (170 aa).

It belongs to the non-flavoprotein flavin reductase family. HpaC subfamily. Monomer. HPA 3-hydroxylase consists of a reductase component HpaC and an oxygenase component HpaB. Some form of interactions between the reductase and the oxygenase facilitate the transfer of FADH(-) to the oxygenase in P.aeruginosa, although interactions are not required in other species.

The enzyme catalyses FADH2 + NAD(+) = FAD + NADH + 2 H(+). It participates in aromatic compound metabolism; 4-hydroxyphenylacetate degradation; pyruvate and succinate semialdehyde from 4-hydroxyphenylacetate: step 1/7. Its activity is regulated as follows. The rate of FAD reduction is independent of the presence of HPA, demonstrating that, in contrast to HPAH from A.baumannii, the activity of the HPAH reductase is not allosterically regulated by the substrate. In terms of biological role, reductase component of the 4-hydroxyphenylacetate (HPA) 3-hydroxylase. Catalyzes the reduction of FAD by NADH. The reduced flavin is then transferred to the oxygenase component HpaB. Is also able to reduce FMN and riboflavin, but preferentially binds FAD. Has no activity with NADPH as the reductant. This chain is 4-hydroxyphenylacetate 3-monooxygenase reductase component, found in Pseudomonas aeruginosa (strain ATCC 15692 / DSM 22644 / CIP 104116 / JCM 14847 / LMG 12228 / 1C / PRS 101 / PAO1).